We begin with the raw amino-acid sequence, 340 residues long: Putative 2-hydroxyacid dehydrogenase C1773.17c (340 aa).

NAD(+)-binding positions include 169–170, 249–251, and aspartate 275; these read AI and TAR. The active site involves arginine 251. Glutamate 280 is an active-site residue. The Proton donor role is filled by histidine 298. 298–301 is a binding site for NAD(+); sequence HCGV.

This sequence belongs to the D-isomer specific 2-hydroxyacid dehydrogenase family.

This Schizosaccharomyces pombe (strain 972 / ATCC 24843) (Fission yeast) protein is Putative 2-hydroxyacid dehydrogenase C1773.17c.